The chain runs to 94 residues: FXYD domain-containing ion transport regulator 6 (94 aa).

The signal sequence occupies residues 1-17; the sequence is METVLILCSLLAPVVLA. The Extracellular segment spans residues 18–34; it reads SAAEKEKEKDPFYYDYQ. The helical transmembrane segment at 35-57 threads the bilayer; the sequence is TLRIGGLVFAVVLFSVGILLILS. Residues 58–94 are Cytoplasmic-facing; it reads RRCKCSFNQKPRAPGDEEAQVENLITTNAAEPQKAEN.

It belongs to the FXYD family. In terms of assembly, regulatory subunit of the sodium/potassium-transporting ATPase which is composed of a catalytic alpha subunit, a non-catalytic beta subunit and an additional regulatory subunit. The regulatory subunit, a member of the FXYD protein family, modulates the enzymatic activity in a tissue- and isoform-specific way by changing affinities of the Na+/K+-ATPase toward Na(+), K(+) or ATP. As to expression, expressed in the neuronal fibers of the medial part of lateral habenula nucleus, thalamus, hypothalamus, stria terminalis, zona incerta, amygdaloid body and cingulum, olfactory bulb, hippocampus, cerebral cortex and cerebellum. In the cerebellum there is a predominant expression pattern in the granule layer of lobules VI-IX of the posterior lobe. Detected in inner ear.

The protein localises to the cell membrane. Its function is as follows. Associates with and regulates the activity of the sodium/potassium-transporting ATPase (NKA) which catalyzes the hydrolysis of ATP coupled with the exchange of Na(+) and K(+) ions across the plasma membrane. Decreases the apparent affinity of the transporter for Na(+). In addition to modulating NKA kinetics, may also function as a regulator of NKA localization to the plasma membrane. This is FXYD domain-containing ion transport regulator 6 (Fxyd6) from Rattus norvegicus (Rat).